We begin with the raw amino-acid sequence, 88 residues long: Apolipoprotein C-I (88 aa).

The first 26 residues, 1-26 (MRLFLSLPVLVVVLAMVLEGPAPAQA), serve as a signal peptide directing secretion.

It belongs to the apolipoprotein C1 family.

The protein resides in the secreted. Its function is as follows. Inhibitor of lipoprotein binding to the low density lipoprotein (LDL) receptor, LDL receptor-related protein, and very low density lipoprotein (VLDL) receptor. Associates with high density lipoproteins (HDL) and the triacylglycerol-rich lipoproteins in the plasma and makes up about 10% of the protein of the VLDL and 2% of that of HDL. Appears to interfere directly with fatty acid uptake and is also the major plasma inhibitor of cholesteryl ester transfer protein (CETP). Binds free fatty acids and reduces their intracellular esterification. Modulates the interaction of APOE with beta-migrating VLDL and inhibits binding of beta-VLDL to the LDL receptor-related protein. In Arctocephalus gazella (Antarctic fur seal), this protein is Apolipoprotein C-I (APOC1).